Here is a 314-residue protein sequence, read N- to C-terminus: tRNA dimethylallyltransferase (314 aa).

Position 12–19 (12–19) interacts with ATP; that stretch reads GPTAAGKS. 14–19 contributes to the substrate binding site; sequence TAAGKS. 3 interaction with substrate tRNA regions span residues 37-40, 161-165, and 245-250; these read DSAT, QRIQR, and RCVGYR.

It belongs to the IPP transferase family. As to quaternary structure, monomer. The cofactor is Mg(2+).

The enzyme catalyses adenosine(37) in tRNA + dimethylallyl diphosphate = N(6)-dimethylallyladenosine(37) in tRNA + diphosphate. Catalyzes the transfer of a dimethylallyl group onto the adenine at position 37 in tRNAs that read codons beginning with uridine, leading to the formation of N6-(dimethylallyl)adenosine (i(6)A). The polypeptide is tRNA dimethylallyltransferase (Bordetella petrii (strain ATCC BAA-461 / DSM 12804 / CCUG 43448)).